Reading from the N-terminus, the 319-residue chain is MSTEKIQKVVIIGSGPAGHTAGIYAGRARLEPLMFEGFMAGGVAAGGQLTTTTEIENFPGFPIDISGSELMDKMREQNIKCGTTIETKTISKVDLKQRPFTIYVEDEEDKPIKAQSIIIATGATAKRMGVPGETEFWSKGVSACAVCDGALPIYRNKHLVVVGGGDTAAEEATFLTHFASKVTLLVRRNVMRASKAMQQKVFSNPKIEVLWDTTLVEIKGEKSVTSVGIYNSETKVSSNLDAQGLFYAIGHTPNSAFLNGQLNTDETGYIITQPGSTKTNVEGVFACGDVQDKVYRQAITAAGNGCMAALDCERFLSSL.

36–48 (EGFMAGGVAAGGQ) contributes to the FAD binding site. An intrachain disulfide couples cysteine 144 to cysteine 147. Position 289 to 298 (289 to 298 (DVQDKVYRQA)) interacts with FAD.

This sequence belongs to the class-II pyridine nucleotide-disulfide oxidoreductase family. Homodimer. FAD serves as cofactor.

It catalyses the reaction [thioredoxin]-dithiol + NADP(+) = [thioredoxin]-disulfide + NADPH + H(+). The protein is Thioredoxin reductase (trrA) of Dictyostelium discoideum (Social amoeba).